Consider the following 275-residue polypeptide: 4-diphosphocytidyl-2-C-methyl-D-erythritol kinase (275 aa).

Lys-15 is an active-site residue. Pro-97–Ser-107 provides a ligand contact to ATP. Residue Asp-137 is part of the active site.

The protein belongs to the GHMP kinase family. IspE subfamily.

The catalysed reaction is 4-CDP-2-C-methyl-D-erythritol + ATP = 4-CDP-2-C-methyl-D-erythritol 2-phosphate + ADP + H(+). The protein operates within isoprenoid biosynthesis; isopentenyl diphosphate biosynthesis via DXP pathway; isopentenyl diphosphate from 1-deoxy-D-xylulose 5-phosphate: step 3/6. In terms of biological role, catalyzes the phosphorylation of the position 2 hydroxy group of 4-diphosphocytidyl-2C-methyl-D-erythritol. The polypeptide is 4-diphosphocytidyl-2-C-methyl-D-erythritol kinase (Pseudothermotoga lettingae (strain ATCC BAA-301 / DSM 14385 / NBRC 107922 / TMO) (Thermotoga lettingae)).